A 181-amino-acid chain; its full sequence is Putative J domain-containing protein R266 (181 aa).

Residues 6–70 (NYYQILDVDN…LKRLNYDSYL (65 aa)) enclose the J domain.

This is Putative J domain-containing protein R266 from Acanthamoeba polyphaga (Amoeba).